Here is a 90-residue protein sequence, read N- to C-terminus: Acylphosphatase (90 aa).

In terms of domain architecture, Acylphosphatase-like spans 3-90 (KKQFVVYGIV…HSFGLFSVEH (88 aa)). Active-site residues include arginine 18 and asparagine 36.

It belongs to the acylphosphatase family.

It carries out the reaction an acyl phosphate + H2O = a carboxylate + phosphate + H(+). The protein is Acylphosphatase (acyP) of Mannheimia succiniciproducens (strain KCTC 0769BP / MBEL55E).